The sequence spans 895 residues: Androgen receptor (895 aa).

The tract at residues 1 to 533 is modulating; it reads MEVQLGLGRV…PIDYYFPPQK (533 aa). The tract at residues 1–562 is interaction with ZNF318; that stretch reads MEVQLGLGRV…GSCKVFFKRA (562 aa). Disordered stretches follow at residues 33 to 150 and 178 to 211; these read VIQN…LSLL and QQQQ…YLEG. 2 stretches are compositionally biased toward low complexity: residues 44 to 81 and 178 to 200; these read AASA…GSPQ and QQQQ…ASGA. Position 65 is a phosphoserine; by CDK9 (S65). S79 bears the Phosphoserine mark. Residues 201–211 are compositionally biased toward polar residues; that stretch reads PTSSKDNYLEG. Y208 is subject to Phosphotyrosine; by CSK. At S241 the chain carries Phosphoserine. Phosphotyrosine; by CSK and TNK2 is present on Y252. Y292, Y331, Y342, and Y347 each carry phosphotyrosine; by CSK. At Y348 the chain carries Phosphotyrosine; by CSK and TNK2. Residue K371 forms a Glycyl lysine isopeptide (Lys-Gly) (interchain with G-Cter in SUMO) linkage. Y378 is subject to Phosphotyrosine; by CSK. A Glycyl lysine isopeptide (Lys-Gly) (interchain with G-Cter in SUMO) cross-link involves residue K496. Residues Y510 and Y527 each carry the phosphotyrosine; by CSK modification. The interval 527 to 894 is interaction with LPXN; that stretch reads YYFPPQKTCL…GKVKPIYFHT (368 aa). The nuclear receptor DNA-binding region spans 534-607; it reads TCLICGDEAS…AGMTLGARKL (74 aa). 2 NR C4-type zinc fingers span residues 535–555 and 571–595; these read CLIC…CGSC and CASR…LRKC. The interaction with HIPK3 stretch occupies residues 547–637; the sequence is YGALTCGSCK…TEETAQKLTV (91 aa). The interval 567 to 894 is interaction with CCAR1; that stretch reads QKYLCASRND…GKVKPIYFHT (328 aa). Residues 600-894 are interaction with KAT7; it reads MTLGARKLKK…GKVKPIYFHT (295 aa). Position 626 is a phosphoserine; by STK4/MST1 (S626). Positions 644–875 constitute an NR LBD domain; it reads ECQPIFLNVL…DFPEMMAEII (232 aa). 17beta-hydroxy-5alpha-androstan-3-one is bound by residues N681 and R728. Glycyl lysine isopeptide (Lys-Gly) (interchain with G-Cter in ubiquitin) cross-links involve residues K821 and K823. Residue T853 coordinates 17beta-hydroxy-5alpha-androstan-3-one. Y891 is subject to Phosphotyrosine; by CSK.

The protein belongs to the nuclear hormone receptor family. NR3 subfamily. In terms of assembly, binds DNA as a homodimer. Part of a ternary complex containing AR, EFCAB6/DJBP and PARK7. Interacts with HIPK3 and NR0B2 in the presence of androgen. The ligand binding domain interacts with KAT7/HBO1 in the presence of dihydrotestosterone. Interacts with EFCAB6/DJBP, PQBP1, RANBP9, RBAK, SPDEF, SRA1, TGFB1I1 and RREB1. Interacts with ZMIZ1/ZIMP10 and ZMIZ2/ZMIP7 which both enhance its transactivation activity. Interacts with SLC30A9 and RAD54L2/ARIP4. Interacts with MACROD1 (via macro domain). Interacts via the ligand-binding domain with LXXLL and FXXLF motifs from NCOA1, NCOA2, NCOA3 and MAGEA11. Interacts (via nuclear receptor DNA binding domain and nuclear receptor ligand binding domain) with NCOA4. The AR N-terminal poly-Gln region binds Ran resulting in enhancement of AR-mediated transactivation. Ran-binding decreases as the poly-Gln length increases. Interacts with HIP1 (via coiled coil domain). Interacts (via ligand-binding domain) with TRIM68. Interacts with TNK2. Interacts with USP26. Interacts with RNF6. Interacts (regulated by RNF6 probably through polyubiquitination) with RNF14; regulates AR transcriptional activity. Interacts with PRMT2 and TRIM24. Interacts with RACK1. Interacts with RANBP10; this interaction enhances dihydrotestosterone-induced AR transcriptional activity. Interacts with PRPF6 in a hormone-independent way; this interaction enhances dihydrotestosterone-induced AR transcriptional activity. Interacts with STK4/MST1. Interacts with ZIPK/DAPK3. Interacts with LPXN. Interacts with MAK. Part of a complex containing AR, MAK and NCOA3. Interacts with CRY1. Interacts with CCAR1 and GATA2. Interacts with ZNF318. Interacts with BUD31. Interacts with ARID4A. Interacts with ARID4B. Interacts (via NR LBD domain) with ZBTB7A; the interaction is direct and androgen-dependent. Interacts with NCOR1. Interacts with NCOR2. Interacts with CRY2 in a ligand-dependent manner. In terms of processing, phosphorylated in prostate cancer cells in response to several growth factors including EGF. Phosphorylation is induced by c-Src kinase (CSK). Tyr-510 is one of the major phosphorylation sites and an increase in phosphorylation and Src kinase activity is associated with prostate cancer progression. Phosphorylation by TNK2 enhances the DNA-binding and transcriptional activity. Phosphorylation at Ser-65 by CDK9 regulates AR promoter selectivity and cell growth. Sumoylated on Lys-371 (major) and Lys-496. Ubiquitinated. Deubiquitinated by USP26. 'Lys-6' and 'Lys-27'-linked polyubiquitination by RNF6 modulates AR transcriptional activity and specificity. Post-translationally, palmitoylated by ZDHHC7 and ZDHHC21. Palmitoylation is required for plasma membrane targeting and for rapid intracellular signaling via ERK and AKT kinases and cAMP generation.

The protein resides in the nucleus. The protein localises to the cytoplasm. Its function is as follows. Steroid hormone receptors are ligand-activated transcription factors that regulate eukaryotic gene expression and affect cellular proliferation and differentiation in target tissues. Transcription factor activity is modulated by bound coactivator and corepressor proteins like ZBTB7A that recruits NCOR1 and NCOR2 to the androgen response elements/ARE on target genes, negatively regulating androgen receptor signaling and androgen-induced cell proliferation. Transcription activation is also down-regulated by NR0B2. Activated, but not phosphorylated, by HIPK3 and ZIPK/DAPK3. This Macaca mulatta (Rhesus macaque) protein is Androgen receptor (AR).